We begin with the raw amino-acid sequence, 1925 residues long: Cilia- and flagella-associated protein 65 (1925 aa).

A helical membrane pass occupies residues F188 to I208. One can recognise an MSP domain in the interval Q877–V986. A coiled-coil region spans residues S1525–F1550. Disordered regions lie at residues K1645–V1667 and S1736–Q1823. Composition is skewed to basic and acidic residues over residues P1649–P1661 and E1739–E1762. Residues G1763–E1804 are compositionally biased toward acidic residues.

The protein belongs to the CFAP65 family. As to quaternary structure, interacts with CFAP47.

It localises to the cell projection. Its subcellular location is the cilium. The protein resides in the flagellum membrane. The protein localises to the cytoplasmic vesicle. It is found in the secretory vesicle. It localises to the acrosome membrane. Its subcellular location is the cytoplasm. Its function is as follows. Plays a role in flagellar formation and sperm motility. The chain is Cilia- and flagella-associated protein 65 from Homo sapiens (Human).